The sequence spans 320 residues: ATP-dependent 6-phosphofructokinase (320 aa).

Glycine 12 lines the ATP pocket. ADP-binding positions include 22–26 (RSVVR) and 55–60 (RYSVSD). ATP contacts are provided by residues 73–74 (RF) and 103–106 (GDGS). Mg(2+) is bound at residue aspartate 104. 126-128 (TID) contributes to the substrate binding site. Aspartate 128 acts as the Proton acceptor in catalysis. Arginine 155 contacts ADP. Substrate-binding positions include arginine 163 and 170-172 (MGR). Residues 186-188 (GCE) and 214-216 (KKH) contribute to the ADP site. Residues glutamate 223, arginine 244, and 250–253 (HIQR) contribute to the substrate site.

This sequence belongs to the phosphofructokinase type A (PFKA) family. ATP-dependent PFK group I subfamily. Prokaryotic clade 'B1' sub-subfamily. In terms of assembly, homotetramer. It depends on Mg(2+) as a cofactor.

Its subcellular location is the cytoplasm. The enzyme catalyses beta-D-fructose 6-phosphate + ATP = beta-D-fructose 1,6-bisphosphate + ADP + H(+). The protein operates within carbohydrate degradation; glycolysis; D-glyceraldehyde 3-phosphate and glycerone phosphate from D-glucose: step 3/4. Its activity is regulated as follows. Allosterically activated by ADP and other diphosphonucleosides, and allosterically inhibited by phosphoenolpyruvate. Its function is as follows. Catalyzes the phosphorylation of D-fructose 6-phosphate to fructose 1,6-bisphosphate by ATP, the first committing step of glycolysis. The chain is ATP-dependent 6-phosphofructokinase from Baumannia cicadellinicola subsp. Homalodisca coagulata.